The following is a 164-amino-acid chain: MKIAVIQGPNLNMLGIREQHIYGNMSLEQIHQQLQTAAEQNGVELEFFQSNFEGEIVDRVQECLGTVDGIMINPAAYSHTSIAIKDALSAVNMPVVEVHISNIYKREEFRQKSITAAASTGVISGFGAFGYHMGLIALMQMINELKAIAQARNAQIQAQTEENK.

Y22 acts as the Proton acceptor in catalysis. Substrate contacts are provided by N73, H79, and D86. Residue H99 is the Proton donor of the active site. Residues 100–101 and R110 contribute to the substrate site; that span reads IS.

This sequence belongs to the type-II 3-dehydroquinase family. As to quaternary structure, homododecamer.

The catalysed reaction is 3-dehydroquinate = 3-dehydroshikimate + H2O. It functions in the pathway metabolic intermediate biosynthesis; chorismate biosynthesis; chorismate from D-erythrose 4-phosphate and phosphoenolpyruvate: step 3/7. Its function is as follows. Catalyzes a trans-dehydration via an enolate intermediate. The chain is 3-dehydroquinate dehydratase from Aliarcobacter butzleri (strain RM4018) (Arcobacter butzleri).